Consider the following 166-residue polypeptide: Phosphopantetheine adenylyltransferase (166 aa).

Thr-10 provides a ligand contact to substrate. ATP is bound by residues 10 to 11 and His-18; that span reads TF. The substrate site is built by Lys-42, Leu-74, and Arg-88. ATP contacts are provided by residues 89–91, Glu-99, and 124–130; these read GLR and NSFISSS.

It belongs to the bacterial CoaD family. As to quaternary structure, homohexamer. Mg(2+) serves as cofactor.

The protein resides in the cytoplasm. It carries out the reaction (R)-4'-phosphopantetheine + ATP + H(+) = 3'-dephospho-CoA + diphosphate. It functions in the pathway cofactor biosynthesis; coenzyme A biosynthesis; CoA from (R)-pantothenate: step 4/5. Reversibly transfers an adenylyl group from ATP to 4'-phosphopantetheine, yielding dephospho-CoA (dPCoA) and pyrophosphate. The chain is Phosphopantetheine adenylyltransferase from Idiomarina loihiensis (strain ATCC BAA-735 / DSM 15497 / L2-TR).